We begin with the raw amino-acid sequence, 477 residues long: Tyrosine-protein kinase transforming protein Fes (477 aa).

Residues 49 to 76 are disordered; the sequence is GEPPPVLLLQDDRHSTSSSEQEREGGRT. Positions 58-74 are enriched in basic and acidic residues; sequence QDDRHSTSSSEQEREGG. An SH2 domain is found at 115-204; sequence WYHGALPRAE…KSGIVLNRAV (90 aa). In terms of domain architecture, Protein kinase spans 216 to 477; the sequence is LVLGEQIGRG…ELQSIRKRHR (262 aa). ATP-binding positions include 222 to 230 and K245; that span reads IGRGNFGEV. Catalysis depends on D338, which acts as the Proton acceptor. Position 368 is a phosphotyrosine; by autocatalysis (Y368).

This sequence belongs to the protein kinase superfamily. Tyr protein kinase family. Fes/fps subfamily.

It catalyses the reaction L-tyrosyl-[protein] + ATP = O-phospho-L-tyrosyl-[protein] + ADP + H(+). The sequence is that of Tyrosine-protein kinase transforming protein Fes (V-FES) from Feline sarcoma virus (strain Snyder-Theilen).